Reading from the N-terminus, the 417-residue chain is Oxidoreductase phnG (417 aa).

6-hydroxy-FAD is bound by residues 16-20 (GGSYA), Arg-61, and Asp-317.

Belongs to the FAD-dependent oxidoreductase family. Requires 6-hydroxy-FAD as cofactor.

It carries out the reaction deoxyherqueinone + NADPH + O2 + H(+) = herqueinone + NADP(+) + H2O. It functions in the pathway secondary metabolite biosynthesis. In terms of biological role, oxidoreductase; part of the gene cluster that mediates the biosynthesis of phenalenones such as herqueinone, compounds that have been reported to treat tumors, bacterial infections and/or mycoses, and rheumatic diseases. The non-reducing polyketide synthase phnA synthesizes the heptaketide backbone and cyclizes it into the angular, hemiketal-containing naphtho-gamma-pyrone prephenalenone. The product template (PT) domain of phnA catalyzes only the C4-C9 aldol condensation, which is unprecedented among known PT domains. The transformation of prephenalenone to phenalenones requires an FAD-dependent monooxygenase phnB, which catalyzes the C2 aromatic hydroxylation of prephenalenone and ring opening of the gamma-pyrone ring simultaneously. Subsequent intramolecular deprotonation of C3 phenolic oxygen accelerates phenalenone ring closure to yield the tricyclic phenalenone core with a C2 hydroxylation. The prenyltransferase phnF further catalyzes reverse C-prenylation of phenalenone by direct electrophilic substitution at C6, or possibly via first a forward O-prenylation of a neighboring phenol in phenalenone, followed by a Claisen rearrangement. The hydroalkoxylation enzyme phnH catalyzes the 5-exo-trig cyclization via acid catalysis after the spontaneous deprotonation of 7-OH, which leads to the formation of the dihydrobenzofuran atrovenetin. Atrovenetin is further converted to deoxyherqueinone by the O-methyltransferase phnC which can methylate C2-OH to stabilize the northern portion of the phenalenone core. Finally, the oxidoreductase phnG converts deoxyherqueinone to herqueinone via C6 hydroxylation. In Penicillium herquei, this protein is Oxidoreductase phnG.